Consider the following 116-residue polypeptide: Phosphoribosyl-AMP cyclohydrolase (116 aa).

Position 85 (aspartate 85) interacts with Mg(2+). Residue cysteine 86 coordinates Zn(2+). Aspartate 87 and aspartate 89 together coordinate Mg(2+). Zn(2+)-binding residues include cysteine 102 and cysteine 109.

This sequence belongs to the PRA-CH family. As to quaternary structure, homodimer. The cofactor is Mg(2+). It depends on Zn(2+) as a cofactor.

The protein localises to the cytoplasm. The enzyme catalyses 1-(5-phospho-beta-D-ribosyl)-5'-AMP + H2O = 1-(5-phospho-beta-D-ribosyl)-5-[(5-phospho-beta-D-ribosylamino)methylideneamino]imidazole-4-carboxamide. It participates in amino-acid biosynthesis; L-histidine biosynthesis; L-histidine from 5-phospho-alpha-D-ribose 1-diphosphate: step 3/9. In terms of biological role, catalyzes the hydrolysis of the adenine ring of phosphoribosyl-AMP. This is Phosphoribosyl-AMP cyclohydrolase from Corynebacterium diphtheriae (strain ATCC 700971 / NCTC 13129 / Biotype gravis).